A 357-amino-acid chain; its full sequence is DNA replication and repair protein RecF (357 aa).

Residue 30–37 (GANGSGKT) coordinates ATP.

This sequence belongs to the RecF family.

The protein resides in the cytoplasm. The RecF protein is involved in DNA metabolism; it is required for DNA replication and normal SOS inducibility. RecF binds preferentially to single-stranded, linear DNA. It also seems to bind ATP. The protein is DNA replication and repair protein RecF of Salmonella paratyphi A (strain ATCC 9150 / SARB42).